The chain runs to 340 residues: Protein jhp_1168 (340 aa).

In terms of assembly, seems to interact with H.pylori HolB.

Functionally, could be the functional equivalent of DNA polymerase III delta subunit (HolA). In Helicobacter pylori (strain J99 / ATCC 700824) (Campylobacter pylori J99), this protein is Protein jhp_1168.